The following is a 482-amino-acid chain: Ubiquitin carboxyl-terminal hydrolase MINDY-1 (482 aa).

Residues 1–119 (MEQPQAECPA…RPQQLPQSPR (119 aa)) are disordered. Basic and acidic residues predominate over residues 21–66 (ESEKHEALSGPEKHPQDKDGADAAPEKHPQDKDGADAHGEAGKQKS). Residues 82–94 (CPPPEASSSPPGP) are compositionally biased toward pro residues. The segment covering 106–119 (EACSRPQQLPQSPR) has biased composition (polar residues). Serine 117 is modified (phosphoserine). Cysteine 151 (nucleophile) is an active-site residue. Histidine 333 (proton acceptor) is an active-site residue. The interval 402–441 (QVDQDYLIALSLQQQQQPQGMLGLSDLELAQQLQQEEYQQ) is ubiquitin-binding domain (UBD). Over residues 437-446 (EEYQQQQAVQ) the composition is skewed to low complexity. Positions 437-482 (EEYQQQQAVQPVRTRAPSSPGRGATSGRPAGERRQRSKTESDCVLL) are disordered. A Phosphoserine modification is found at serine 454. Over residues 466–482 (AGERRQRSKTESDCVLL) the composition is skewed to basic and acidic residues.

Belongs to the MINDY deubiquitinase family. FAM63 subfamily.

The catalysed reaction is Thiol-dependent hydrolysis of ester, thioester, amide, peptide and isopeptide bonds formed by the C-terminal Gly of ubiquitin (a 76-residue protein attached to proteins as an intracellular targeting signal).. Functionally, hydrolase that can specifically remove 'Lys-48'-linked conjugated ubiquitin from proteins. Has exodeubiquitinase activity and has a preference for long polyubiquitin chains. May play a regulatory role at the level of protein turnover. This Rattus norvegicus (Rat) protein is Ubiquitin carboxyl-terminal hydrolase MINDY-1 (Mindy1).